Consider the following 657-residue polypeptide: tRNA uridine 5-carboxymethylaminomethyl modification enzyme MnmG (657 aa).

13–18 (GGGHAG) lines the FAD pocket. 281-295 (GPRYCPSVEDKINRF) contacts NAD(+).

It belongs to the MnmG family. Homodimer. Heterotetramer of two MnmE and two MnmG subunits. It depends on FAD as a cofactor.

Its subcellular location is the cytoplasm. In terms of biological role, NAD-binding protein involved in the addition of a carboxymethylaminomethyl (cmnm) group at the wobble position (U34) of certain tRNAs, forming tRNA-cmnm(5)s(2)U34. This chain is tRNA uridine 5-carboxymethylaminomethyl modification enzyme MnmG, found in Acidovorax ebreus (strain TPSY) (Diaphorobacter sp. (strain TPSY)).